A 351-amino-acid polypeptide reads, in one-letter code: Protein RecA (351 aa).

Residue 68 to 75 participates in ATP binding; that stretch reads GPESSGKT.

Belongs to the RecA family.

The protein resides in the cytoplasm. Can catalyze the hydrolysis of ATP in the presence of single-stranded DNA, the ATP-dependent uptake of single-stranded DNA by duplex DNA, and the ATP-dependent hybridization of homologous single-stranded DNAs. It interacts with LexA causing its activation and leading to its autocatalytic cleavage. This is Protein RecA from Chloroflexus aggregans (strain MD-66 / DSM 9485).